An 80-amino-acid chain; its full sequence is Conotoxin Bt6.5 (80 aa).

The signal sequence occupies residues 1–22 (MKLTCVLIIAVLFLTACQLATA). Positions 23-45 (KTYSTGRQKHRALRSTDKNIKLS) are excised as a propeptide. Disulfide bonds link C48–C62, C55–C66, and C61–C73.

Belongs to the conotoxin O1 superfamily. As to expression, expressed by the venom duct.

The protein resides in the secreted. Its function is as follows. When injected intracranially in mice, induces a series of symptoms such as quivering, climbing, scratching, barrel rolling and paralysis of limbs. Unexpectedly, no effect is observed on ionic currents when tested on locust DUM neuron. In Conus betulinus (Beech cone), this protein is Conotoxin Bt6.5.